We begin with the raw amino-acid sequence, 410 residues long: Phthiocerol/phthiodiolone dimycocerosyl transferase (410 aa).

His-118 serves as the catalytic Proton acceptor.

It belongs to the acyltransferase PapA5 family. In terms of assembly, monomer. Interacts directly with the acyl carrier protein (ACP) domain of the mycocerosic acid synthase (mas) protein.

The catalysed reaction is 2 a mycocerosyl-[mycocerosic acid synthase] + a phthiocerol = a dimycocerosyl phthiocerol + 2 holo-[mycocerosic acid synthase].. It carries out the reaction 2 a mycocerosyl-[mycocerosic acid synthase] + a phthiodiolone = a dimycocerosyl phthiodiolone + 2 holo-[mycocerosic acid synthase].. It catalyses the reaction 2 a mycocerosyl-[mycocerosic acid synthase] + a phenolphthiocerol = a dimycocerosyl phenolphthiocerol + 2 holo-[mycocerosic acid synthase].. Catalyzes diesterification of phthiocerol, phthiodiolone, and phenolphthiocerol with mycocerosic acids, the final step in the phthiocerol, phthiodiolone and phenolphthiocerol dimycocerosate esters (PDIM) synthesis. Can directly transfer the mycocerosate bound to the mycocerosic acid synthase (mas) onto the substrate alcohols. The sequence is that of Phthiocerol/phthiodiolone dimycocerosyl transferase (papA5) from Mycobacterium sp. (strain JLS).